We begin with the raw amino-acid sequence, 262 residues long: Small ribosomal subunit protein eS4y (262 aa).

One can recognise an S4 RNA-binding domain in the interval 42 to 104; it reads LPLVLIIRNR…TNENFRLLYD (63 aa).

Belongs to the eukaryotic ribosomal protein eS4 family.

It localises to the cytoplasm. The sequence is that of Small ribosomal subunit protein eS4y (RPS4B) from Arabidopsis thaliana (Mouse-ear cress).